The sequence spans 430 residues: Gamma-glutamyl phosphate reductase (430 aa).

The protein belongs to the gamma-glutamyl phosphate reductase family.

It localises to the cytoplasm. The catalysed reaction is L-glutamate 5-semialdehyde + phosphate + NADP(+) = L-glutamyl 5-phosphate + NADPH + H(+). It participates in amino-acid biosynthesis; L-proline biosynthesis; L-glutamate 5-semialdehyde from L-glutamate: step 2/2. Functionally, catalyzes the NADPH-dependent reduction of L-glutamate 5-phosphate into L-glutamate 5-semialdehyde and phosphate. The product spontaneously undergoes cyclization to form 1-pyrroline-5-carboxylate. The sequence is that of Gamma-glutamyl phosphate reductase from Polaromonas naphthalenivorans (strain CJ2).